The following is a 142-amino-acid chain: Ribosome-binding factor A (142 aa).

Residues D118–K142 are disordered.

The protein belongs to the RbfA family. As to quaternary structure, monomer. Binds 30S ribosomal subunits, but not 50S ribosomal subunits or 70S ribosomes.

Its subcellular location is the cytoplasm. Functionally, one of several proteins that assist in the late maturation steps of the functional core of the 30S ribosomal subunit. Associates with free 30S ribosomal subunits (but not with 30S subunits that are part of 70S ribosomes or polysomes). Required for efficient processing of 16S rRNA. May interact with the 5'-terminal helix region of 16S rRNA. The sequence is that of Ribosome-binding factor A from Shewanella piezotolerans (strain WP3 / JCM 13877).